A 453-amino-acid chain; its full sequence is Zinc finger CCCH domain-containing protein 26 (453 aa).

A compositionally biased stretch (polar residues) spans 1 to 15 (MSETQQQVQNSTGSI). A disordered region spans residues 1-47 (MSETQQQVQNSTGSIRSPDKIEDTFRRMKVNEDNMEQSSPYPDRPGE). Serine 2 bears the N-acetylserine mark. The span at 17-32 (SPDKIEDTFRRMKVNE) shows a compositional bias: basic and acidic residues. 5 consecutive C3H1-type zinc fingers follow at residues 44–72 (RPGE…HPLT), 95–112 (ETGA…HPKD), 129–157 (RQGE…HPHP), 261–289 (FSER…HPKE), and 307–335 (RPGQ…HSML). Positions 360–379 (STNLRISSPPSPSDMTTLSN) are enriched in polar residues. The tract at residues 360–453 (STNLRISSPP…KVQDSSDKST (94 aa)) is disordered. Over residues 391–407 (ETEKQDDSPTEPEKSEV) the composition is skewed to basic and acidic residues. Positions 413–422 (PNGSDSTSLP) are enriched in polar residues. Over residues 441–453 (DSSKVQDSSDKST) the composition is skewed to basic and acidic residues.

The protein localises to the nucleus. The chain is Zinc finger CCCH domain-containing protein 26 (ZFN2) from Arabidopsis thaliana (Mouse-ear cress).